A 389-amino-acid chain; its full sequence is Cytochrome b (389 aa).

A run of 4 helical transmembrane segments spans residues 32-52 (FGSL…FLAM), 76-98 (YILR…VHIG), 113-133 (LWSI…LGYV), and 179-199 (FFSL…AHMI). Heme b contacts are provided by His82 and His96. 2 residues coordinate heme b: His183 and His197. His202 lines the a ubiquinone pocket. 4 helical membrane passes run 225–245 (FIFK…IIVF), 289–309 (LLGV…PFVD), 322–342 (INMV…LVGA), and 349–369 (FIFL…VIVP).

It belongs to the cytochrome b family. As to quaternary structure, fungal cytochrome b-c1 complex contains 10 subunits; 3 respiratory subunits, 2 core proteins and 5 low-molecular weight proteins. Cytochrome b-c1 complex is a homodimer. Heme b serves as cofactor.

The protein localises to the mitochondrion inner membrane. Its function is as follows. Component of the ubiquinol-cytochrome c reductase complex (complex III or cytochrome b-c1 complex) that is part of the mitochondrial respiratory chain. The b-c1 complex mediates electron transfer from ubiquinol to cytochrome c. Contributes to the generation of a proton gradient across the mitochondrial membrane that is then used for ATP synthesis. In Mycena viridimarginata, this protein is Cytochrome b (COB).